Consider the following 103-residue polypeptide: Large ribosomal subunit protein bL21 (103 aa).

It belongs to the bacterial ribosomal protein bL21 family. In terms of assembly, part of the 50S ribosomal subunit. Contacts protein L20.

Its function is as follows. This protein binds to 23S rRNA in the presence of protein L20. The sequence is that of Large ribosomal subunit protein bL21 from Rhodococcus erythropolis (strain PR4 / NBRC 100887).